The chain runs to 417 residues: Serine--tRNA ligase (417 aa).

232–234 (TSE) lines the L-serine pocket. 263–265 (RKE) lines the ATP pocket. Position 286 (Glu286) interacts with L-serine. An ATP-binding site is contributed by 350–353 (EISS). Ser385 serves as a coordination point for L-serine.

It belongs to the class-II aminoacyl-tRNA synthetase family. Type-1 seryl-tRNA synthetase subfamily. In terms of assembly, homodimer. The tRNA molecule binds across the dimer.

It localises to the cytoplasm. It carries out the reaction tRNA(Ser) + L-serine + ATP = L-seryl-tRNA(Ser) + AMP + diphosphate + H(+). It catalyses the reaction tRNA(Sec) + L-serine + ATP = L-seryl-tRNA(Sec) + AMP + diphosphate + H(+). It functions in the pathway aminoacyl-tRNA biosynthesis; selenocysteinyl-tRNA(Sec) biosynthesis; L-seryl-tRNA(Sec) from L-serine and tRNA(Sec): step 1/1. Functionally, catalyzes the attachment of serine to tRNA(Ser). Is also able to aminoacylate tRNA(Sec) with serine, to form the misacylated tRNA L-seryl-tRNA(Sec), which will be further converted into selenocysteinyl-tRNA(Sec). The protein is Serine--tRNA ligase of Campylobacter hominis (strain ATCC BAA-381 / DSM 21671 / CCUG 45161 / LMG 19568 / NCTC 13146 / CH001A).